Consider the following 117-residue polypeptide: Large ribosomal subunit protein bL19 (117 aa).

Belongs to the bacterial ribosomal protein bL19 family.

In terms of biological role, this protein is located at the 30S-50S ribosomal subunit interface and may play a role in the structure and function of the aminoacyl-tRNA binding site. The chain is Large ribosomal subunit protein bL19 from Vesicomyosocius okutanii subsp. Calyptogena okutanii (strain HA).